A 144-amino-acid chain; its full sequence is Large ribosomal subunit protein uL16 (144 aa).

Basic residues predominate over residues 1-19 (MLLPKRVKYRRQHRPKTTG). The interval 1–23 (MLLPKRVKYRRQHRPKTTGRSKG) is disordered.

It belongs to the universal ribosomal protein uL16 family. In terms of assembly, part of the 50S ribosomal subunit.

Functionally, binds 23S rRNA and is also seen to make contacts with the A and possibly P site tRNAs. The sequence is that of Large ribosomal subunit protein uL16 from Staphylococcus haemolyticus (strain JCSC1435).